The sequence spans 407 residues: Putative cystathionine beta-lyase (407 aa).

K237 bears the N6-(pyridoxal phosphate)lysine mark.

The protein belongs to the class-II pyridoxal-phosphate-dependent aminotransferase family. MalY/PatB cystathionine beta-lyase subfamily. Pyridoxal 5'-phosphate is required as a cofactor.

It carries out the reaction L,L-cystathionine + H2O = L-homocysteine + pyruvate + NH4(+). The enzyme catalyses an S-substituted L-cysteine + H2O = a thiol + pyruvate + NH4(+). The protein operates within amino-acid biosynthesis; L-methionine biosynthesis via de novo pathway; L-homocysteine from L-cystathionine: step 1/1. The polypeptide is Putative cystathionine beta-lyase (Mycobacterium tuberculosis (strain CDC 1551 / Oshkosh)).